Reading from the N-terminus, the 254-residue chain is Imidazole glycerol phosphate synthase subunit HisF (254 aa).

Catalysis depends on residues D11 and D130.

This sequence belongs to the HisA/HisF family. As to quaternary structure, heterodimer of HisH and HisF.

It is found in the cytoplasm. The enzyme catalyses 5-[(5-phospho-1-deoxy-D-ribulos-1-ylimino)methylamino]-1-(5-phospho-beta-D-ribosyl)imidazole-4-carboxamide + L-glutamine = D-erythro-1-(imidazol-4-yl)glycerol 3-phosphate + 5-amino-1-(5-phospho-beta-D-ribosyl)imidazole-4-carboxamide + L-glutamate + H(+). It functions in the pathway amino-acid biosynthesis; L-histidine biosynthesis; L-histidine from 5-phospho-alpha-D-ribose 1-diphosphate: step 5/9. IGPS catalyzes the conversion of PRFAR and glutamine to IGP, AICAR and glutamate. The HisF subunit catalyzes the cyclization activity that produces IGP and AICAR from PRFAR using the ammonia provided by the HisH subunit. This is Imidazole glycerol phosphate synthase subunit HisF from Acidiphilium cryptum (strain JF-5).